The primary structure comprises 1392 residues: Ankyrin repeat domain-containing protein 30B (1392 aa).

A disordered region spans residues 1-21 (MKRLLAAAGKGVRGPEPPNPF). ANK repeat units follow at residues 72-101 (KKRT…QLNV), 105-134 (EGRT…DLNY), 138-167 (YGNT…VIEV), 171-200 (ASLT…NANA), and 204-233 (SKCT…DVFA). 6 disordered regions span residues 265–292 (PKNP…ERTP), 558–587 (AQMF…VSQK), 636–656 (DRET…PTCG), 671–690 (RETL…PTCG), 830–877 (KEGA…SDSE), and 904–926 (GKIE…QNSV). Polar residues-rich tracts occupy residues 267 to 280 (NPQN…STGT) and 576 to 586 (DSESPCETVSQ). The segment covering 636-650 (DRETFKAESPDKDGL) has biased composition (basic and acidic residues). Polar residues predominate over residues 830 to 840 (KEGATKTVTGQ). 2 stretches are compositionally biased toward basic and acidic residues: residues 864-874 (LGRKEDTKSTS) and 904-915 (GKIEESPEKPSH). Coiled coils occupy residues 960–1168 (RELK…KQDK) and 1270–1318 (ETQC…QQLV).

As to expression, expressed in brain, breast and testis.

The polypeptide is Ankyrin repeat domain-containing protein 30B (ANKRD30B) (Homo sapiens (Human)).